Here is a 348-residue protein sequence, read N- to C-terminus: Holliday junction branch migration complex subunit RuvB (348 aa).

The segment at Met-1–Tyr-183 is large ATPase domain (RuvB-L). ATP-binding positions include Leu-22, Arg-23, Gly-64, Lys-67, Thr-68, Thr-69, Glu-130–Phe-132, Arg-173, Tyr-183, and Arg-220. Residue Thr-68 coordinates Mg(2+). The interval Thr-184–Asp-254 is small ATPAse domain (RuvB-S). A head domain (RuvB-H) region spans residues His-257–Glu-348. Positions 293, 312, and 317 each coordinate DNA.

The protein belongs to the RuvB family. Homohexamer. Forms an RuvA(8)-RuvB(12)-Holliday junction (HJ) complex. HJ DNA is sandwiched between 2 RuvA tetramers; dsDNA enters through RuvA and exits via RuvB. An RuvB hexamer assembles on each DNA strand where it exits the tetramer. Each RuvB hexamer is contacted by two RuvA subunits (via domain III) on 2 adjacent RuvB subunits; this complex drives branch migration. In the full resolvosome a probable DNA-RuvA(4)-RuvB(12)-RuvC(2) complex forms which resolves the HJ.

It is found in the cytoplasm. It catalyses the reaction ATP + H2O = ADP + phosphate + H(+). In terms of biological role, the RuvA-RuvB-RuvC complex processes Holliday junction (HJ) DNA during genetic recombination and DNA repair, while the RuvA-RuvB complex plays an important role in the rescue of blocked DNA replication forks via replication fork reversal (RFR). RuvA specifically binds to HJ cruciform DNA, conferring on it an open structure. The RuvB hexamer acts as an ATP-dependent pump, pulling dsDNA into and through the RuvAB complex. RuvB forms 2 homohexamers on either side of HJ DNA bound by 1 or 2 RuvA tetramers; 4 subunits per hexamer contact DNA at a time. Coordinated motions by a converter formed by DNA-disengaged RuvB subunits stimulates ATP hydrolysis and nucleotide exchange. Immobilization of the converter enables RuvB to convert the ATP-contained energy into a lever motion, pulling 2 nucleotides of DNA out of the RuvA tetramer per ATP hydrolyzed, thus driving DNA branch migration. The RuvB motors rotate together with the DNA substrate, which together with the progressing nucleotide cycle form the mechanistic basis for DNA recombination by continuous HJ branch migration. Branch migration allows RuvC to scan DNA until it finds its consensus sequence, where it cleaves and resolves cruciform DNA. This is Holliday junction branch migration complex subunit RuvB from Methylocella silvestris (strain DSM 15510 / CIP 108128 / LMG 27833 / NCIMB 13906 / BL2).